The sequence spans 120 residues: Natriuretic peptide (120 aa).

Residues 1–25 (MVGLSRLADGGLLLVLALLPLALDG) form the signal peptide. A propeptide spanning residues 26-70 (KPAPLEKAPMAPARIIPYLRPVGKESRAALDRMVPPEDGDSRRLE) is cleaved from the precursor. Cysteine 81 and cysteine 97 are disulfide-bonded. Residues 110–120 (ILPYLRPIRKE) constitute a propeptide that is removed on maturation.

It belongs to the natriuretic peptide family. Expressed by the venom gland.

It is found in the secreted. Functionally, natriuretic peptide that dose-dependently induces the rapid relaxation of rat aortic strips phenylephrine-precontracted. Acts by stimulating cGMP production in a dose-dependent manner (by probably activating NPR1 and/or NPR2). May also show potent hypotensive effects. This is Natriuretic peptide from Micrurus altirostris (Uruguayan coral snake).